Consider the following 1854-residue polypeptide: Protein virilizer (1854 aa).

Position 186 is a phosphoserine (Ser-186). Composition is skewed to basic and acidic residues over residues 202-214 (YHQHAEEQEQREM) and 236-259 (THSESNDREYIRCSRDKGSRDWSR). Disordered stretches follow at residues 202–361 (YHQH…EIIG), 777–821 (NPEE…GKPV), 1570–1589 (TSTETPPEAEGEANPSASSC), 1720–1788 (VRGR…NRGS), and 1804–1854 (IGSP…SYLR). A phosphoserine mark is found at Ser-258, Ser-260, and Ser-276. Over residues 275–285 (RSRSVVDEHKW) the composition is skewed to basic and acidic residues. Position 288 is a phosphothreonine (Thr-288). A Phosphoserine modification is found at Ser-295. At Thr-297 the chain carries Phosphothreonine. Phosphoserine is present on residues Ser-301 and Ser-312. Basic and acidic residues-rich tracts occupy residues 325–343 (HSSESLHRGERDRDDEDRS) and 777–796 (NPEEKEEKAEKSDAEDKAME). Positions 779–808 (EEKEEKAEKSDAEDKAMEVENEAVEAGGEK) form a coiled coil. Low complexity-rich tracts occupy residues 1738–1748 (SRPPNTSRPPS) and 1816–1838 (SYRSASDSHFSSSDSHYSSPHYS).

This sequence belongs to the vir family. Component of the WMM complex, a N6-methyltransferase complex composed of a catalytic subcomplex, named MAC, and of an associated subcomplex, named MACOM. The MAC subcomplex is composed of Ime4/Mettl3 and Mettl14. The MACOM subcomplex is composed of fl(2)d, Flacc/Xio, Hakai, vir, and, in some cases of nito. Part of a complex containing fl(2)d, Sxl and vir.

The protein localises to the nucleus. Associated component of the WMM complex, a complex that mediates N6-methyladenosine (m6A) methylation of mRNAs, a modification that plays a role in the efficiency of mRNA splicing and is required for sex determination. Required for sex determination and dosage compensation via Sxl alternative splicing: m6A methylation acts as a key regulator of Sxl pre-mRNA and promotes female-specific alternative splicing of Sxl, which determines female physiognomy. M6A methylation is also required for neuronal functions. Required for proper inclusion of regulated exons in Ubx transcripts, leading to isoforms Ia/b and IIa/b. The protein is Protein virilizer of Drosophila melanogaster (Fruit fly).